Here is a 355-residue protein sequence, read N- to C-terminus: Endonuclease III homolog (355 aa).

Residues 44 to 50 (PKKFRFQ) carry the Nuclear localization signal motif. The 28-residue stretch at 122–149 (FQGDIPDTVEDLMTLPGVGPKMGYLCMS) folds into the HhH domain. Lys-142 serves as the catalytic Nucleophile; for N-glycosylase activity. Positions 210, 217, 220, and 228 each coordinate [4Fe-4S] cluster. A Nuclear localization signal motif is present at residues 252–255 (KKRP). Positions 303–355 (KEPAADIDVDQKPPVAFHSTTKETRSLRRSKRVAKKSSQYFSQQSLQDIEDLV) are disordered. Polar residues predominate over residues 338–349 (KSSQYFSQQSLQ).

This sequence belongs to the Nth/MutY family. [4Fe-4S] cluster serves as cofactor.

It is found in the nucleus. It localises to the mitochondrion. The enzyme catalyses 2'-deoxyribonucleotide-(2'-deoxyribose 5'-phosphate)-2'-deoxyribonucleotide-DNA = a 3'-end 2'-deoxyribonucleotide-(2,3-dehydro-2,3-deoxyribose 5'-phosphate)-DNA + a 5'-end 5'-phospho-2'-deoxyribonucleoside-DNA + H(+). Functionally, bifunctional DNA N-glycosylase with associated apurinic/apyrimidinic (AP) lyase function that catalyzes the first step in base excision repair (BER), the primary repair pathway for the repair of oxidative DNA damage. The DNA N-glycosylase activity releases the damaged DNA base from DNA by cleaving the N-glycosidic bond, leaving an AP site. The AP-lyase activity cleaves the phosphodiester bond 3' to the AP site by a beta-elimination. Primarily recognizes and repairs oxidative base damage of pyrimidines. Also has 8-oxo-7,8-dihydroguanine (8-oxoG) DNA glycosylase activity. Also involved in the repair of 7-methylguanine lesions, although it cannot directly repair alkylated DNA bases. Probably does so via excision of methylformamidopyrimidine (mFapy) lesions, a spontaneous processing product of 7-methylguanine. The protein is Endonuclease III homolog (nth1) of Schizosaccharomyces pombe (strain 972 / ATCC 24843) (Fission yeast).